The following is a 392-amino-acid chain: Integrin-linked kinase-associated serine/threonine phosphatase 2C (392 aa).

The residue at position 1 (Met-1) is an N-acetylmethionine. Residues 1–91 (MDLFGDLPEP…PEEEKNGGEE (91 aa)) are disordered. A compositionally biased stretch (low complexity) spans 31–40 (DLPPTSSTDS). Polar residues predominate over residues 59 to 70 (SGSLATSGSQVV). Residues 72–91 (NEGKGAKRKAPEEEKNGGEE) are compositionally biased toward basic and acidic residues. A PPM-type phosphatase domain is found at 108 to 390 (KGYVAERKGE…DNVTVMVVRI (283 aa)). Residues Asp-152 and Gly-153 each coordinate Mn(2+). An N6-acetyllysine modification is found at Lys-210. Positions 326 and 381 each coordinate Mn(2+).

This sequence belongs to the PP2C family. As to quaternary structure, interacts with ILK. The cofactor is Mg(2+). Mn(2+) is required as a cofactor. In terms of tissue distribution, widely expressed. Highest expression observed in kidney, liver and muscle.

The protein resides in the cytoplasm. It catalyses the reaction O-phospho-L-seryl-[protein] + H2O = L-seryl-[protein] + phosphate. It carries out the reaction O-phospho-L-threonyl-[protein] + H2O = L-threonyl-[protein] + phosphate. Protein phosphatase that may play a role in regulation of cell cycle progression via dephosphorylation of its substrates whose appropriate phosphorylation states might be crucial for cell proliferation. Selectively associates with integrin linked kinase (ILK), to modulate cell adhesion and growth factor signaling. Inhibits the ILK-GSK3B signaling axis and may play an important role in inhibiting oncogenic transformation. This chain is Integrin-linked kinase-associated serine/threonine phosphatase 2C (Ilkap), found in Rattus norvegicus (Rat).